Reading from the N-terminus, the 81-residue chain is uncharacterized protein (81 aa).

The interval 11 to 34 is disordered; the sequence is GSVSSSNKVSVANGSSSSSFGSNG.

This is an uncharacterized protein from Dictyostelium discoideum (Social amoeba).